The chain runs to 120 residues: Meiosis expressed gene 1 protein homolog (120 aa).

Residues methionine 1 to lysine 45 are disordered. Over residues arginine 28–lysine 45 the composition is skewed to basic and acidic residues.

It belongs to the MEIG1 family.

In Oxyrrhis marina (Dinoflagellate), this protein is Meiosis expressed gene 1 protein homolog.